The primary structure comprises 495 residues: Probable cytosol aminopeptidase (495 aa).

Mn(2+) is bound by residues K264 and D269. The active site involves K276. The Mn(2+) site is built by D287, D346, and E348. The active site involves R350.

The protein belongs to the peptidase M17 family. It depends on Mn(2+) as a cofactor.

The protein resides in the cytoplasm. It carries out the reaction Release of an N-terminal amino acid, Xaa-|-Yaa-, in which Xaa is preferably Leu, but may be other amino acids including Pro although not Arg or Lys, and Yaa may be Pro. Amino acid amides and methyl esters are also readily hydrolyzed, but rates on arylamides are exceedingly low.. The enzyme catalyses Release of an N-terminal amino acid, preferentially leucine, but not glutamic or aspartic acids.. Functionally, presumably involved in the processing and regular turnover of intracellular proteins. Catalyzes the removal of unsubstituted N-terminal amino acids from various peptides. This chain is Probable cytosol aminopeptidase, found in Geotalea uraniireducens (strain Rf4) (Geobacter uraniireducens).